A 417-amino-acid chain; its full sequence is Tyrosine--tRNA ligase (417 aa).

Tyr-34 serves as a coordination point for L-tyrosine. The 'HIGH' region motif lies at 39 to 48 (PSGDSLHIGH). L-tyrosine-binding residues include Tyr-165 and Gln-169. Residues 227–231 (KFGKT) carry the 'KMSKS' region motif. Residue Lys-230 participates in ATP binding. In terms of domain architecture, S4 RNA-binding spans 349 to 415 (ANIVDWLVDT…GKKNYTLAKV (67 aa)).

It belongs to the class-I aminoacyl-tRNA synthetase family. TyrS type 1 subfamily. As to quaternary structure, homodimer.

It is found in the cytoplasm. The enzyme catalyses tRNA(Tyr) + L-tyrosine + ATP = L-tyrosyl-tRNA(Tyr) + AMP + diphosphate + H(+). Catalyzes the attachment of tyrosine to tRNA(Tyr) in a two-step reaction: tyrosine is first activated by ATP to form Tyr-AMP and then transferred to the acceptor end of tRNA(Tyr). This Limosilactobacillus fermentum (strain NBRC 3956 / LMG 18251) (Lactobacillus fermentum) protein is Tyrosine--tRNA ligase.